A 559-amino-acid chain; its full sequence is 3-aminoavenalumate diazotase (559 aa).

Serine 181 is a Mg(2+) binding site. Residues alanine 227, glycine 332, and serine 336 each contribute to the ATP site. Glutamate 337 contributes to the Mg(2+) binding site. Positions 416 and 437 each coordinate ATP.

This sequence belongs to the ATP-dependent AMP-binding enzyme family. Mg(2+) serves as cofactor.

The enzyme catalyses 3-aminoavenalumate + nitrite + ATP = 3-diazoavenalumate + AMP + diphosphate + H2O. The catalysed reaction is (E)-3-aminocoumarate + nitrite + ATP + H(+) = (E)-3-diazocoumarate + AMP + diphosphate + H2O. It catalyses the reaction 3-amino-4-hydroxybenzoate + nitrite + ATP + H(+) = 3-diazo-4-hydroxybenzoate + AMP + diphosphate + H2O. Ligase involved in the biosynthesis of avenalumic acid (AVA). Catalyzes the diazotization of 3-aminoavenalumic acid (3-AAA) to 3-diazoavenalumic acid (3-DAA). It can also act on 3-aminocoumaric acid (3-ACA) and 3-amino-4-hydroxybenzoic acid (3,4-AHBA) with lower activity. The protein is 3-aminoavenalumate diazotase of Streptomyces sp.